The following is a 137-amino-acid chain: MTTLTKNSKIIYAGTGRRKTSIARVKLVPGSGKLIINGLPGESYLQFSPNYLRVSYSPLKILGLNKEYDIYVKTEGGGLTGQANAIRLGLARALCRMNPDNRTTLKAEGFLTRDARIKERKKYGLRKARKAPQYSKR.

It belongs to the universal ribosomal protein uS9 family.

Its subcellular location is the plastid. The protein resides in the chloroplast. This Gracilaria tenuistipitata var. liui (Red alga) protein is Small ribosomal subunit protein uS9c (rps9).